Reading from the N-terminus, the 447-residue chain is N-succinylarginine dihydrolase (447 aa).

Substrate-binding positions include 19-28 (AGLSFGNEAS), asparagine 110, and 137-138 (HR). Residue glutamate 174 is part of the active site. Substrate is bound at residue arginine 212. The active site involves histidine 248. 2 residues coordinate substrate: aspartate 250 and asparagine 359. Catalysis depends on cysteine 365, which acts as the Nucleophile.

The protein belongs to the succinylarginine dihydrolase family. Homodimer.

It catalyses the reaction N(2)-succinyl-L-arginine + 2 H2O + 2 H(+) = N(2)-succinyl-L-ornithine + 2 NH4(+) + CO2. The protein operates within amino-acid degradation; L-arginine degradation via AST pathway; L-glutamate and succinate from L-arginine: step 2/5. Functionally, catalyzes the hydrolysis of N(2)-succinylarginine into N(2)-succinylornithine, ammonia and CO(2). The polypeptide is N-succinylarginine dihydrolase (Salmonella agona (strain SL483)).